The following is a 523-amino-acid chain: Mitochondrial distribution and morphology protein 12 (523 aa).

An SMP-LTD domain is found at 1–483; the sequence is MSFDINWEKL…WPSWICVDMA (483 aa). Residues 108 to 117 show a composition bias toward basic and acidic residues; that stretch reads HEADIINDHD. Disordered stretches follow at residues 108–160, 178–213, 270–313, and 483–523; these read HEAD…QYDE, SASTPKRTSPQRPPLISPRGEVTQQTLSKPKEPFQS, KTKE…NAKN, and AEND…KKED. Composition is skewed to acidic residues over residues 118 to 140 and 148 to 158; these read YGDEDDIDDDYDNDSDDYDDDEN and EDEENEESSQY. Polar residues-rich tracts occupy residues 178-187 and 277-288; these read SASTPKRTSP and SGDQQQGKQTGK. Residues 289 to 313 show a composition bias toward basic and acidic residues; sequence ANEKGQKHKHEHEEEQGSDKQNAKN. The segment covering 483 to 501 has biased composition (acidic residues); that stretch reads AENDDEEEDDDDDDHDEDN. A compositionally biased stretch (basic and acidic residues) spans 502-523; the sequence is EGRGRMRDTGDVDVRDHDKKED.

This sequence belongs to the MDM12 family. Component of the ER-mitochondria encounter structure (ERMES) or MDM complex, composed of MMM1, MDM10, MDM12 and MDM34. An MMM1 homodimer associates with one molecule of MDM12 on each side in a pairwise head-to-tail manner, and the SMP-LTD domains of MMM1 and MDM12 generate a continuous hydrophobic tunnel for phospholipid trafficking.

It is found in the mitochondrion outer membrane. Its subcellular location is the endoplasmic reticulum membrane. Component of the ERMES/MDM complex, which serves as a molecular tether to connect the endoplasmic reticulum (ER) and mitochondria. Components of this complex are involved in the control of mitochondrial shape and protein biogenesis, and function in nonvesicular lipid trafficking between the ER and mitochondria. MDM12 is required for the interaction of the ER-resident membrane protein MMM1 and the outer mitochondrial membrane-resident beta-barrel protein MDM10. The MDM12-MMM1 subcomplex functions in the major beta-barrel assembly pathway that is responsible for biogenesis of all mitochondrial outer membrane beta-barrel proteins, and acts in a late step after the SAM complex. The MDM10-MDM12-MMM1 subcomplex further acts in the TOM40-specific pathway after the action of the MDM12-MMM1 complex. Essential for establishing and maintaining the structure of mitochondria and maintenance of mtDNA nucleoids. This Lodderomyces elongisporus (strain ATCC 11503 / CBS 2605 / JCM 1781 / NBRC 1676 / NRRL YB-4239) (Yeast) protein is Mitochondrial distribution and morphology protein 12.